The following is a 468-amino-acid chain: Acid phosphatase PHO1 (468 aa).

The signal sequence occupies residues methionine 1 to alanine 22. The Nucleophile role is filled by histidine 84. N-linked (GlcNAc...) asparagine glycans are attached at residues asparagine 163, asparagine 196, asparagine 256, and asparagine 321. The active-site Proton donor is the aspartate 346. N-linked (GlcNAc...) asparagine glycosylation is found at asparagine 360 and asparagine 453.

This sequence belongs to the histidine acid phosphatase family.

The enzyme catalyses a phosphate monoester + H2O = an alcohol + phosphate. The protein is Acid phosphatase PHO1 (PHO1) of Komagataella pastoris (Yeast).